A 332-amino-acid polypeptide reads, in one-letter code: MQEKLQAIVAQAKETIHSVSELVHLDEIRVQYLGKKGELTAMMKTLGQLSAEERPKAGQIINEAKQSVQTFLSEKKAELEDAILAAKLAGETIDVSLPGRGLDTGGLHPVTRTLRRIETIFSKAGFDVATGPEIEDDWHNFEALNIPETHPARAMHDTFYFDENTVLRTHTSGVQIRTMEEKDAPMRIIAPGRVYRCDSDQTHTPMFHQVEGLIIEENTSFAQLRTLIIEFLRQFFEDENLKVRFRPSYFPFTEPSAEVDIATNLFGDGRWIEVLGCGMVHPNVLKNVDVDSEKYTGLAFGLGVERLAMLRYGVTDLRQFFENDLRFLKQFK.

E254 serves as a coordination point for Mg(2+).

It belongs to the class-II aminoacyl-tRNA synthetase family. Phe-tRNA synthetase alpha subunit type 1 subfamily. In terms of assembly, tetramer of two alpha and two beta subunits. Requires Mg(2+) as cofactor.

Its subcellular location is the cytoplasm. It carries out the reaction tRNA(Phe) + L-phenylalanine + ATP = L-phenylalanyl-tRNA(Phe) + AMP + diphosphate + H(+). The polypeptide is Phenylalanine--tRNA ligase alpha subunit (Hydrogenovibrio crunogenus (strain DSM 25203 / XCL-2) (Thiomicrospira crunogena)).